The following is a 199-amino-acid chain: Putative DNA-directed RNA polymerase subunit L376 (199 aa).

Belongs to the eukaryotic RPB7/RPC8 RNA polymerase subunit family.

The protein localises to the virion. The catalysed reaction is RNA(n) + a ribonucleoside 5'-triphosphate = RNA(n+1) + diphosphate. This is Putative DNA-directed RNA polymerase subunit L376 from Acanthamoeba polyphaga (Amoeba).